Here is a 253-residue protein sequence, read N- to C-terminus: MNFSGGGRQEAAGSRGRRAPRPREQDRDVQLSKALSYALRHGALKLGLPMGADGFVPLGTLLQLPQFRGFSAEDVQRVVDTNRKQRFALQLGDPSTGLLIRANQGHSLQVPKLELMPLETPQALPPMLVHGTFWKHWPSILLKGLSCQGRTHIHLAPGLPGDPGIISGMRSHCEIAVFIDGPLALADGIPFFRSANGVILTPGNTDGFLLPKYFKEALQLRPTRKPLSLAGDEETECQSSPKHSSRERRRIQQ.

Residue M1 is modified to N-acetylmethionine. Disordered stretches follow at residues 1-29 (MNFS…DRDV) and 225-253 (KPLS…RIQQ). S240 carries the phosphoserine modification. The segment covering 243 to 253 (HSSRERRRIQQ) has biased composition (basic residues).

This sequence belongs to the KptA/TPT1 family. In terms of tissue distribution, widely expressed. Weakly or not expressed in lung, spleen, small intestine and peripheral blood leukocytes.

It catalyses the reaction 2'-phospho-[ligated tRNA] + NAD(+) = mature tRNA + ADP-alpha-D-ribose 1'',2''-cyclic phosphate + nicotinamide. Its function is as follows. Catalyzes the last step of tRNA splicing, the transfer of the splice junction 2'-phosphate from ligated tRNA to NAD to produce ADP-ribose 1''-2'' cyclic phosphate. This is tRNA 2'-phosphotransferase 1 (TRPT1) from Homo sapiens (Human).